The primary structure comprises 342 residues: S-adenosylmethionine:tRNA ribosyltransferase-isomerase (342 aa).

The protein belongs to the QueA family. Monomer.

It localises to the cytoplasm. The enzyme catalyses 7-aminomethyl-7-carbaguanosine(34) in tRNA + S-adenosyl-L-methionine = epoxyqueuosine(34) in tRNA + adenine + L-methionine + 2 H(+). It participates in tRNA modification; tRNA-queuosine biosynthesis. Functionally, transfers and isomerizes the ribose moiety from AdoMet to the 7-aminomethyl group of 7-deazaguanine (preQ1-tRNA) to give epoxyqueuosine (oQ-tRNA). This chain is S-adenosylmethionine:tRNA ribosyltransferase-isomerase, found in Streptococcus agalactiae serotype III (strain NEM316).